The primary structure comprises 347 residues: N-acetyl-gamma-glutamyl-phosphate reductase (347 aa).

Cysteine 152 is a catalytic residue.

This sequence belongs to the NAGSA dehydrogenase family. Type 1 subfamily.

It localises to the cytoplasm. It carries out the reaction N-acetyl-L-glutamate 5-semialdehyde + phosphate + NADP(+) = N-acetyl-L-glutamyl 5-phosphate + NADPH + H(+). Its pathway is amino-acid biosynthesis; L-arginine biosynthesis; N(2)-acetyl-L-ornithine from L-glutamate: step 3/4. Its function is as follows. Catalyzes the NADPH-dependent reduction of N-acetyl-5-glutamyl phosphate to yield N-acetyl-L-glutamate 5-semialdehyde. The sequence is that of N-acetyl-gamma-glutamyl-phosphate reductase from Neisseria meningitidis serogroup C / serotype 2a (strain ATCC 700532 / DSM 15464 / FAM18).